Here is a 170-residue protein sequence, read N- to C-terminus: MEFWSELQSYQSLRRLLELASARTSSCWRFIFGSTLTNVIYRAKEDYSSRFAELLSFNPGIFASLNLGHHSFFQEIVIKNLDFSSPGRTVSGLAFICFILDQWSAQTHLSEGYTLDYMTMALWRTLLRRKRVLGCSPAQPPHGLDPVREEEEEEEEEENLRAGLDPQTEL.

Residues 137 to 170 form a disordered region; the sequence is PAQPPHGLDPVREEEEEEEEEENLRAGLDPQTEL. Residues 148–158 show a composition bias toward acidic residues; that stretch reads REEEEEEEEEE.

Belongs to the adenoviridae E1B 19 kDa protein family.

Its subcellular location is the host cell membrane. The protein resides in the host nucleus envelope. It localises to the host nucleus lamina. Putative adenovirus Bcl-2 homolog that inhibits apoptosis induced by TNF or FAS pathways, as well as p53-mediated apoptosis. Without E1B 19K function, virus production is compromised because of premature death of host cell. Interacts with Bax protein in cell lysates. In Homo sapiens (Human), this protein is E1B protein, small T-antigen.